The following is a 156-amino-acid chain: DNA gyrase inhibitor (156 aa).

The protein belongs to the DNA gyrase inhibitor family. In terms of assembly, interacts with DNA gyrase.

The protein resides in the cytoplasm. In terms of biological role, inhibits the supercoiling activity of DNA gyrase. Acts by inhibiting DNA gyrase at an early step, prior to (or at the step of) binding of DNA by the gyrase. It protects cells against toxins that target DNA gyrase, by inhibiting activity of these toxins and reducing the formation of lethal double-strand breaks in the cell. This chain is DNA gyrase inhibitor, found in Serratia proteamaculans (strain 568).